A 297-amino-acid polypeptide reads, in one-letter code: 4-diphosphocytidyl-2-C-methyl-D-erythritol kinase (297 aa).

Lysine 19 is a catalytic residue. Residue 105–115 coordinates ATP; that stretch reads PIASGIGGGSA. Aspartate 147 is an active-site residue.

It belongs to the GHMP kinase family. IspE subfamily.

It catalyses the reaction 4-CDP-2-C-methyl-D-erythritol + ATP = 4-CDP-2-C-methyl-D-erythritol 2-phosphate + ADP + H(+). Its pathway is isoprenoid biosynthesis; isopentenyl diphosphate biosynthesis via DXP pathway; isopentenyl diphosphate from 1-deoxy-D-xylulose 5-phosphate: step 3/6. Functionally, catalyzes the phosphorylation of the position 2 hydroxy group of 4-diphosphocytidyl-2C-methyl-D-erythritol. This Rhizobium etli (strain CIAT 652) protein is 4-diphosphocytidyl-2-C-methyl-D-erythritol kinase.